A 156-amino-acid chain; its full sequence is SsrA-binding protein (156 aa).

It belongs to the SmpB family.

Its subcellular location is the cytoplasm. Functionally, required for rescue of stalled ribosomes mediated by trans-translation. Binds to transfer-messenger RNA (tmRNA), required for stable association of tmRNA with ribosomes. tmRNA and SmpB together mimic tRNA shape, replacing the anticodon stem-loop with SmpB. tmRNA is encoded by the ssrA gene; the 2 termini fold to resemble tRNA(Ala) and it encodes a 'tag peptide', a short internal open reading frame. During trans-translation Ala-aminoacylated tmRNA acts like a tRNA, entering the A-site of stalled ribosomes, displacing the stalled mRNA. The ribosome then switches to translate the ORF on the tmRNA; the nascent peptide is terminated with the 'tag peptide' encoded by the tmRNA and targeted for degradation. The ribosome is freed to recommence translation, which seems to be the essential function of trans-translation. The chain is SsrA-binding protein from Desulfitobacterium hafniense (strain DSM 10664 / DCB-2).